A 134-amino-acid chain; its full sequence is Transcription antitermination protein NusB (134 aa).

It belongs to the NusB family.

In terms of biological role, involved in transcription antitermination. Required for transcription of ribosomal RNA (rRNA) genes. Binds specifically to the boxA antiterminator sequence of the ribosomal RNA (rrn) operons. The polypeptide is Transcription antitermination protein NusB (Shewanella frigidimarina (strain NCIMB 400)).